Consider the following 805-residue polypeptide: Sucrose synthase (805 aa).

Residues 275-752 form a GT-B glycosyltransferase region; sequence MVFNVVILSP…GLQRIEEKYT (478 aa).

The protein belongs to the glycosyltransferase 1 family. Plant sucrose synthase subfamily.

It catalyses the reaction an NDP-alpha-D-glucose + D-fructose = a ribonucleoside 5'-diphosphate + sucrose + H(+). Functionally, sucrose-cleaving enzyme that provides UDP-glucose and fructose for various metabolic pathways. This Medicago sativa (Alfalfa) protein is Sucrose synthase.